The chain runs to 650 residues: Acetyl-coenzyme A synthetase (650 aa).

Residues 191–194, Thr-311, and Asn-335 contribute to the CoA site; that span reads RGGR. ATP-binding positions include 387 to 389, 411 to 416, Asp-500, and Arg-515; these read GEP and DTWWQT. Ser-523 lines the CoA pocket. Arg-526 lines the ATP pocket. Positions 537, 539, and 542 each coordinate Mg(2+). Residue Arg-584 participates in CoA binding. Position 609 is an N6-acetyllysine (Lys-609).

It belongs to the ATP-dependent AMP-binding enzyme family. Mg(2+) is required as a cofactor. Acetylated. Deacetylation by the SIR2-homolog deacetylase activates the enzyme.

The enzyme catalyses acetate + ATP + CoA = acetyl-CoA + AMP + diphosphate. Functionally, catalyzes the conversion of acetate into acetyl-CoA (AcCoA), an essential intermediate at the junction of anabolic and catabolic pathways. AcsA undergoes a two-step reaction. In the first half reaction, AcsA combines acetate with ATP to form acetyl-adenylate (AcAMP) intermediate. In the second half reaction, it can then transfer the acetyl group from AcAMP to the sulfhydryl group of CoA, forming the product AcCoA. The sequence is that of Acetyl-coenzyme A synthetase from Shewanella sp. (strain ANA-3).